We begin with the raw amino-acid sequence, 458 residues long: Phosphoglucosamine mutase (458 aa).

Catalysis depends on Ser-108, which acts as the Phosphoserine intermediate. Positions 108, 247, 249, and 251 each coordinate Mg(2+). Phosphoserine is present on Ser-108.

The protein belongs to the phosphohexose mutase family. Mg(2+) is required as a cofactor. In terms of processing, activated by phosphorylation.

It carries out the reaction alpha-D-glucosamine 1-phosphate = D-glucosamine 6-phosphate. Catalyzes the conversion of glucosamine-6-phosphate to glucosamine-1-phosphate. The protein is Phosphoglucosamine mutase of Thiobacillus denitrificans (strain ATCC 25259 / T1).